A 685-amino-acid polypeptide reads, in one-letter code: Tyrosinase (685 aa).

Residue Ser-2 is modified to N-acetylserine. Residues His-67, His-97, His-106, His-278, His-282, and His-307 each contribute to the Cu cation site. A cross-link (2'-(S-cysteinyl)-histidine (Cys-His)) is located at residues 95 to 97; it reads CTH. A propeptide spans 409–685 (could be involved in enzyme activation); that stretch reads ANFVENVADR…PCGHGPEDHI (277 aa).

Belongs to the tyrosinase family. Cu(2+) is required as a cofactor.

The enzyme catalyses 2 L-dopa + O2 = 2 L-dopaquinone + 2 H2O. It carries out the reaction L-tyrosine + O2 = L-dopaquinone + H2O. This is a copper-containing oxidase that functions in the formation of pigments such as melanins and other polyphenolic compounds. The sequence is that of Tyrosinase (T) from Neurospora crassa (strain ATCC 24698 / 74-OR23-1A / CBS 708.71 / DSM 1257 / FGSC 987).